A 301-amino-acid polypeptide reads, in one-letter code: tRNA dimethylallyltransferase 1 (301 aa).

11-18 contributes to the ATP binding site; that stretch reads GPTGVGKT. 13-18 contributes to the substrate binding site; it reads TGVGKT. The segment at 36-39 is interaction with substrate tRNA; sequence DSRQ.

Belongs to the IPP transferase family. In terms of assembly, monomer. Mg(2+) is required as a cofactor.

It catalyses the reaction adenosine(37) in tRNA + dimethylallyl diphosphate = N(6)-dimethylallyladenosine(37) in tRNA + diphosphate. Its function is as follows. Catalyzes the transfer of a dimethylallyl group onto the adenine at position 37 in tRNAs that read codons beginning with uridine, leading to the formation of N6-(dimethylallyl)adenosine (i(6)A). This Bacteroides fragilis (strain YCH46) protein is tRNA dimethylallyltransferase 1.